We begin with the raw amino-acid sequence, 158 residues long: Endoribonuclease YbeY (158 aa).

The Zn(2+) site is built by His119, His123, and Asp129.

The protein belongs to the endoribonuclease YbeY family. The cofactor is Zn(2+).

The protein resides in the cytoplasm. In terms of biological role, single strand-specific metallo-endoribonuclease involved in late-stage 70S ribosome quality control and in maturation of the 3' terminus of the 16S rRNA. The chain is Endoribonuclease YbeY from Chlamydia felis (strain Fe/C-56) (Chlamydophila felis).